The chain runs to 222 residues: Ras-related protein RabT1 (222 aa).

A GTP-binding site is contributed by 37 to 44 (GDNKTGKS). The Effector region motif lies at 59 to 66 (VSSIGVDF). Residues 85 to 89 (DVNSC) and 145 to 148 (NKCD) contribute to the GTP site. C219 is modified (cysteine methyl ester). Residue C219 is the site of S-geranylgeranyl cysteine attachment. A propeptide spans 220–222 (NIL) (removed in mature form).

Belongs to the small GTPase superfamily. Rab family.

The protein localises to the cell membrane. The chain is Ras-related protein RabT1 (rabT1) from Dictyostelium discoideum (Social amoeba).